Consider the following 765-residue polypeptide: Probable dipeptidyl peptidase 4 (765 aa).

Residues M1 to A14 form the signal peptide. N35, N78, N101, N110, N169, N218, N465, and N490 each carry an N-linked (GlcNAc...) asparagine glycan. S613 serves as the catalytic Charge relay system. Residue N665 is glycosylated (N-linked (GlcNAc...) asparagine). Active-site charge relay system residues include D690 and H725.

This sequence belongs to the peptidase S9B family.

Its subcellular location is the secreted. The enzyme catalyses Release of an N-terminal dipeptide, Xaa-Yaa-|-Zaa-, from a polypeptide, preferentially when Yaa is Pro, provided Zaa is neither Pro nor hydroxyproline.. Its function is as follows. Extracellular dipeptidyl-peptidase which removes N-terminal dipeptides sequentially from polypeptides having unsubstituted N-termini provided that the penultimate residue is proline. Contributes to pathogenicity. The polypeptide is Probable dipeptidyl peptidase 4 (dpp4) (Aspergillus fumigatus (strain ATCC MYA-4609 / CBS 101355 / FGSC A1100 / Af293) (Neosartorya fumigata)).